The following is a 542-amino-acid chain: Membrane protein insertase YidC (542 aa).

The helical transmembrane segment at 5–25 (TLLAVILSITVFYVFSLLFAP) threads the bilayer. The disordered stretch occupies residues 33-64 (ESTGQAVSAPVSAGQPVAGGVQPSASAPSLPA). A compositionally biased stretch (low complexity) spans 54-64 (QPSASAPSLPA). A run of 5 helical transmembrane segments spans residues 323–343 (LDLG…KYFY), 345–365 (YVGN…ALFF), 419–439 (LPML…MFSI), 463–483 (MLGL…TMFI), and 500–520 (MLAL…GLVL).

It belongs to the OXA1/ALB3/YidC family. Type 1 subfamily. As to quaternary structure, interacts with the Sec translocase complex via SecD. Specifically interacts with transmembrane segments of nascent integral membrane proteins during membrane integration.

It localises to the cell inner membrane. In terms of biological role, required for the insertion and/or proper folding and/or complex formation of integral membrane proteins into the membrane. Involved in integration of membrane proteins that insert both dependently and independently of the Sec translocase complex, as well as at least some lipoproteins. Aids folding of multispanning membrane proteins. The protein is Membrane protein insertase YidC of Pelobacter propionicus (strain DSM 2379 / NBRC 103807 / OttBd1).